The sequence spans 304 residues: Carbonic anhydrase 5A, mitochondrial (304 aa).

A mitochondrion-targeting transit peptide spans 1 to 34; that stretch reads MLRAKMLGRGPYKPLAILRHMGPLCATRPQHWRF. The region spanning 35 to 295 is the Alpha-carbonic anhydrase domain; the sequence is QHSYAEKHSN…LRGRNVRSSF (261 aa). Zn(2+)-binding residues include His129, His131, and His154.

It belongs to the alpha-carbonic anhydrase family. Zn(2+) is required as a cofactor. In terms of tissue distribution, high in liver, also detected in heart, lung, kidney, spleen and intestine.

Its subcellular location is the mitochondrion. It catalyses the reaction hydrogencarbonate + H(+) = CO2 + H2O. Its function is as follows. Mitochondrial carbonic anhydrase that catalyzes the reversible conversion of carbon dioxide to bicarbonate/HCO3. Mitochondria are impermeable to HCO3, and thus this intramitochondrial carbonic anhydrase is pivotal in providing HCO3 for multiple mitochondrial enzymes that catalyze the formation of essential metabolites of intermediary metabolism in the urea and Krebs cycles. In Rattus norvegicus (Rat), this protein is Carbonic anhydrase 5A, mitochondrial.